The following is a 711-amino-acid chain: Ribosomal RNA large subunit methyltransferase K/L (711 aa).

The THUMP domain occupies 43–154 (LGYRITLWSR…RGQITIGLNF (112 aa)).

This sequence belongs to the methyltransferase superfamily. RlmKL family.

The protein localises to the cytoplasm. It catalyses the reaction guanosine(2445) in 23S rRNA + S-adenosyl-L-methionine = N(2)-methylguanosine(2445) in 23S rRNA + S-adenosyl-L-homocysteine + H(+). It carries out the reaction guanosine(2069) in 23S rRNA + S-adenosyl-L-methionine = N(2)-methylguanosine(2069) in 23S rRNA + S-adenosyl-L-homocysteine + H(+). Functionally, specifically methylates the guanine in position 2445 (m2G2445) and the guanine in position 2069 (m7G2069) of 23S rRNA. The chain is Ribosomal RNA large subunit methyltransferase K/L from Shewanella sediminis (strain HAW-EB3).